The sequence spans 392 residues: Fasciculation and elongation protein zeta-1 (392 aa).

Positions 1-37 (MEAPLVSLDEEFEDLRPSCSEDPEEKPQCFYGSSPHH) are disordered. The residue at position 58 (Ser-58) is a Phosphoserine. The segment at 175–198 (MQNSPDPEEEEEVLEEEDGGETSS) is disordered. Over residues 180 to 194 (DPEEEEEVLEEEDGG) the composition is skewed to acidic residues. Residues 230 to 298 (SELTELLDQV…KKRRKEKGLS (69 aa)) are a coiled coil. Ser-298 and Ser-316 each carry phosphoserine.

This sequence belongs to the zygin family. In terms of assembly, homodimer; disulfide-linked. May form heterodimers with FEZ2. Interacts with the NH2-terminal variable region (V1) of PKC zeta and weakly with that of PKC epsilon. Interacts with UBE4B. Interacts with SAP30L. Interacts with SCOC and ULK1; SCOC interferes with ULK1-binding to FEZ1. Directly interacts with SCOC and UVRAG. Stabilizes the interaction between SCOC and UVRAG during amino acid starvation. In terms of processing, phosphorylated by protein kinase C zeta; which enhances interaction with UBE4B and polyubiquitination. Polyubiquitinated in a UBE4B-dependent manner; which does not lead to proteasomal degradation and may be important for neurogenic activity. Polyubiquitin linkage seems to be mainly through Lys-26. Mainly expressed in brain.

It is found in the cytoplasm. The protein localises to the cytoskeleton. The protein resides in the microtubule organizing center. Its subcellular location is the centrosome. It localises to the cell membrane. Its function is as follows. May be involved in axonal outgrowth as component of the network of molecules that regulate cellular morphology and axon guidance machinery. Able to restore partial locomotion and axonal fasciculation to C.elegans unc-76 mutants in germline transformation experiments. May participate in the transport of mitochondria and other cargos along microtubules. The protein is Fasciculation and elongation protein zeta-1 (FEZ1) of Homo sapiens (Human).